The chain runs to 608 residues: Zinc finger protein 652 (608 aa).

S57 bears the Phosphoserine mark. Residues 61-232 (VLADTKMSKP…KRATKEAKAP (172 aa)) form a disordered region. A compositionally biased stretch (basic and acidic residues) spans 71-97 (HLHETEEQPYFREPRAVSDVHTVKEDR). 2 stretches are compositionally biased toward acidic residues: residues 98–108 (ENSDDTEEEEE) and 151–162 (EEDEEETEEEAT). S100 is subject to Phosphoserine. Residue T103 is modified to Phosphothreonine. Over residues 194-208 (AASAAAATTSPAPRT) the composition is skewed to low complexity. Residues S196 and S203 each carry the phosphoserine modification. Residues 244–267 (LTCEKCPRVFNTRWYLEKHMNVTH) form a C2H2-type 1 zinc finger. The C2H2-type 2; degenerate zinc finger occupies 271–293 (QICDKCGKKFVLESELSLHQQTD). 6 C2H2-type zinc fingers span residues 298 to 321 (IQCV…KIVH), 328 to 350 (FACE…MVAH), 356 to 378 (FTCE…SLQH), 384 to 406 (FRCE…MSIH), 412 to 434 (FMCQ…MKTH), and 440 to 462 (FICE…RRTH). Residues 468–491 (YPCDVCGQRFRFSNMLKAHKEKCF) form a C2H2-type 9; degenerate zinc finger. A mediates interaction with CBFA2T3 region spans residues 497–608 (VNVPPAVQIP…KNSAAPAQHH (112 aa)).

The protein belongs to the krueppel C2H2-type zinc-finger protein family. As to quaternary structure, interacts with CBFA2T3.

The protein resides in the nucleus. Functions as a transcriptional repressor. In Mus musculus (Mouse), this protein is Zinc finger protein 652 (Znf652).